The primary structure comprises 359 residues: Fructose-bisphosphate aldolase (359 aa).

Serine 50 is a binding site for D-glyceraldehyde 3-phosphate. Aspartate 83 functions as the Proton donor in the catalytic mechanism. Zn(2+) is bound by residues histidine 84, aspartate 105, glutamate 142, and histidine 198. Glycine 199 is a binding site for dihydroxyacetone phosphate. Zn(2+) is bound at residue histidine 232. Dihydroxyacetone phosphate contacts are provided by residues 233–235 (GSS) and 275–278 (NIDT).

It belongs to the class II fructose-bisphosphate aldolase family. Homodimer. Requires Zn(2+) as cofactor.

The enzyme catalyses beta-D-fructose 1,6-bisphosphate = D-glyceraldehyde 3-phosphate + dihydroxyacetone phosphate. It participates in carbohydrate biosynthesis; Calvin cycle. Its pathway is carbohydrate degradation; glycolysis; D-glyceraldehyde 3-phosphate and glycerone phosphate from D-glucose: step 4/4. Its function is as follows. Catalyzes the aldol condensation of dihydroxyacetone phosphate (DHAP or glycerone-phosphate) with glyceraldehyde 3-phosphate (G3P) to form fructose 1,6-bisphosphate (FBP) in gluconeogenesis and the reverse reaction in glycolysis. The protein is Fructose-bisphosphate aldolase (cbbA) of Sinorhizobium medicae (strain WSM419) (Ensifer medicae).